We begin with the raw amino-acid sequence, 232 residues long: Large ribosomal subunit protein uL1 (232 aa).

This sequence belongs to the universal ribosomal protein uL1 family. As to quaternary structure, part of the 50S ribosomal subunit.

Binds directly to 23S rRNA. The L1 stalk is quite mobile in the ribosome, and is involved in E site tRNA release. In terms of biological role, protein L1 is also a translational repressor protein, it controls the translation of the L11 operon by binding to its mRNA. In Burkholderia multivorans (strain ATCC 17616 / 249), this protein is Large ribosomal subunit protein uL1.